We begin with the raw amino-acid sequence, 238 residues long: Lipoprotein-releasing system ATP-binding protein LolD (238 aa).

The region spanning 6 to 238 (LVCQGIRKVY…RSSLAQEMEA (233 aa)) is the ABC transporter domain. 42-49 (GSSGSGKS) is an ATP binding site.

The protein belongs to the ABC transporter superfamily. Lipoprotein translocase (TC 3.A.1.125) family. As to quaternary structure, the complex is composed of two ATP-binding proteins (LolD) and two transmembrane proteins (LolC and LolE).

It is found in the cell inner membrane. In terms of biological role, part of the ABC transporter complex LolCDE involved in the translocation of mature outer membrane-directed lipoproteins, from the inner membrane to the periplasmic chaperone, LolA. Responsible for the formation of the LolA-lipoprotein complex in an ATP-dependent manner. This Aliivibrio fischeri (strain ATCC 700601 / ES114) (Vibrio fischeri) protein is Lipoprotein-releasing system ATP-binding protein LolD.